The sequence spans 345 residues: uncharacterized protein (345 aa).

The segment at Met1–Glu98 is disordered. 3 stretches are compositionally biased toward basic and acidic residues: residues Arg18–Thr27, Ser42–Pro68, and Pro76–His86.

The protein belongs to the class IV-like SAM-binding methyltransferase superfamily. RNA methyltransferase TrmH family.

This is an uncharacterized protein from Escherichia coli O157:H7.